A 151-amino-acid polypeptide reads, in one-letter code: Large ribosomal subunit protein bL9 (151 aa).

Belongs to the bacterial ribosomal protein bL9 family.

Binds to the 23S rRNA. In Rhodococcus opacus (strain B4), this protein is Large ribosomal subunit protein bL9.